The chain runs to 400 residues: Malonyl CoA-acyl carrier protein transacylase (400 aa).

Residues Ser92 and His201 contribute to the active site.

Belongs to the FabD family.

The catalysed reaction is holo-[ACP] + malonyl-CoA = malonyl-[ACP] + CoA. Functionally, is involved in the mycosubtilin synthetase assembly, by catalyzing the transfer of malonyl groups to a specific acyl-carrier-protein domain on MycA. In Bacillus subtilis, this protein is Malonyl CoA-acyl carrier protein transacylase (fenF).